We begin with the raw amino-acid sequence, 787 residues long: Patatin-like phospholipase domain-containing protein OOU_Y34scaffold00095g16.3 (787 aa).

2 disordered regions span residues Ala-47 to Phe-69 and Lys-137 to Arg-164. Over residues Ala-59–Phe-69 the composition is skewed to low complexity. A compositionally biased stretch (basic residues) spans His-144–Lys-157. A helical transmembrane segment spans residues Trp-180–Thr-200. A PNPLA domain is found at Leu-375–Asn-566. The short motif at Gly-406–Gly-410 is the GXSXG element. Ser-408 serves as the catalytic Nucleophile. The active-site Proton acceptor is the Asp-553. Residues Gly-745–Lys-787 are disordered. Positions Thr-746–Ala-759 are enriched in acidic residues. Over residues Thr-777–Lys-787 the composition is skewed to polar residues.

The protein belongs to the PLPL family.

It localises to the membrane. In terms of biological role, probable lipid hydrolase. In Pyricularia oryzae (strain Y34) (Rice blast fungus), this protein is Patatin-like phospholipase domain-containing protein OOU_Y34scaffold00095g16.3.